Here is a 68-residue protein sequence, read N- to C-terminus: Protein transport protein Sec61 subunit gamma (68 aa).

Topologically, residues 1–32 (MDQVMQFVEPSRQFVKDSIRLVKRCTKPDRKE) are cytoplasmic. A helical transmembrane segment spans residues 33 to 61 (FQKVAMATAIGFAIMGFIGFFVKLIHIPI). Topologically, residues 62–68 (NNIIVGG) are extracellular.

Belongs to the SecE/SEC61-gamma family. As to quaternary structure, the SEC61 channel-forming translocon complex consists of channel-forming core components SEC61A1, SEC61B and SEC61G and different auxiliary components such as SEC62 and SEC63. The SEC61 channel associates with the multi-pass translocon (MPT) complex.

It localises to the endoplasmic reticulum membrane. Functionally, component of SEC61 channel-forming translocon complex that mediates transport of signal peptide-containing precursor polypeptides across the endoplasmic reticulum (ER). Forms a ribosome receptor and a gated pore in the ER membrane, both functions required for cotranslational translocation of nascent polypeptides. The SEC61 channel is also involved in ER membrane insertion of transmembrane proteins: it mediates membrane insertion of the first few transmembrane segments of proteins, while insertion of subsequent transmembrane regions of multi-pass membrane proteins is mediated by the multi-pass translocon (MPT) complex. The protein is Protein transport protein Sec61 subunit gamma (sec61g) of Harpagifer antarcticus (Antarctic spiny plunderfish).